The following is a 668-amino-acid chain: CLK4-associating serine/arginine rich protein (668 aa).

Serine 101 carries the phosphoserine modification. Disordered stretches follow at residues 173-232 (AEVE…GMAD) and 252-668 (AKAL…HYRH). Positions 182 to 214 (PEEEESPAEEESNSDEDEVIPDIDVEVDVDELN) are enriched in acidic residues. A compositionally biased stretch (basic residues) spans 265–283 (RRSRRQRREFREKRLRGRK). 2 positions are modified to phosphoserine: serine 285 and serine 294. Residues 290 to 313 (ARRDSPTYDPYKRSPSESSSESRS) are compositionally biased toward basic and acidic residues. Position 327 is a phosphothreonine (threonine 327). Serine 331 and serine 335 each carry phosphoserine. Composition is skewed to low complexity over residues 340-353 (AAAA…GAAP) and 378-395 (SSSS…SRSS). Positions 396 to 435 (SRSRRGYYRSGRHARSRSRSWSRSRSRSRRYSRSRSRGRR) are enriched in basic residues. The span at 436–446 (HSDGGSRDGHR) shows a compositional bias: basic and acidic residues. Residues 475–486 (RGARGPRHHSSS) show a composition bias toward basic residues. Low complexity-rich tracts occupy residues 487–510 (HSRS…SRSQ) and 518–527 (QSHSQSQSHS). The residue at position 541 (serine 541) is a Phosphoserine. Threonine 567 carries the post-translational modification Phosphothreonine. Residues 579–641 (ALNRQFKADK…ERQYSRQSRS (63 aa)) adopt a coiled-coil conformation. Composition is skewed to basic and acidic residues over residues 584-611 (FKAD…ELRA) and 619-635 (KERE…ERQY). Low complexity predominate over residues 636–645 (SRQSRSPSPR). Basic residues predominate over residues 653-668 (SRRRSRSRSRSPHYRH).

Belongs to the splicing factor SR family. As to quaternary structure, probably interacts with CLK4. In terms of processing, phosphorylated in vitro by CLK4. Highly expressed in brain. Expressed at intermediate level in lung and liver. In brain, it is expressed in the hippocampus, cerebellum and olfactory bulb.

It localises to the nucleus. The protein resides in the nucleoplasm. Probably functions as an alternative splicing regulator. May regulate the mRNA splicing of genes such as CLK1. May act by regulating members of the CLK kinase family. This chain is CLK4-associating serine/arginine rich protein (Clasrp), found in Mus musculus (Mouse).